A 150-amino-acid polypeptide reads, in one-letter code: Transcriptional repressor NrdR (150 aa).

Residues 3-34 fold into a zinc finger; the sequence is CPFCGQLDSKVVDSRPDKGGAAIRRRRECESC. The region spanning 49–139 is the ATP-cone domain; that stretch reads PLVLKKDGRR…VYRSFKDVNE (91 aa).

It belongs to the NrdR family. The cofactor is Zn(2+).

Functionally, negatively regulates transcription of bacterial ribonucleotide reductase nrd genes and operons by binding to NrdR-boxes. This is Transcriptional repressor NrdR from Geobacter sulfurreducens (strain ATCC 51573 / DSM 12127 / PCA).